We begin with the raw amino-acid sequence, 338 residues long: Acetylcholinesterase (338 aa).

Residue Asn8 is glycosylated (N-linked (GlcNAc...) asparagine). The Acyl-ester intermediate role is filled by Ser99. Cysteines 153 and 164 form a disulfide. Glu226 acts as the Charge relay system in catalysis.

Belongs to the type-B carboxylesterase/lipase family.

It is found in the synapse. The protein resides in the secreted. It localises to the cell membrane. The enzyme catalyses acetylcholine + H2O = choline + acetate + H(+). Functionally, terminates signal transduction at the neuromuscular junction by rapid hydrolysis of the acetylcholine released into the synaptic cleft. This is Acetylcholinesterase (ache) from Myxine glutinosa (Atlantic hagfish).